The chain runs to 546 residues: Chaperonin GroEL (546 aa).

ATP is bound by residues 30-33, lysine 51, 87-91, glycine 415, 479-481, and aspartate 495; these read TLGP, DGTTT, and NAA.

Belongs to the chaperonin (HSP60) family. In terms of assembly, forms a cylinder of 14 subunits composed of two heptameric rings stacked back-to-back. Interacts with the co-chaperonin GroES.

Its subcellular location is the cytoplasm. It catalyses the reaction ATP + H2O + a folded polypeptide = ADP + phosphate + an unfolded polypeptide.. Together with its co-chaperonin GroES, plays an essential role in assisting protein folding. The GroEL-GroES system forms a nano-cage that allows encapsulation of the non-native substrate proteins and provides a physical environment optimized to promote and accelerate protein folding. In Azotobacter vinelandii, this protein is Chaperonin GroEL.